The following is a 309-amino-acid chain: L-arabinose 1-dehydrogenase (NAD(P)(+)) (309 aa).

NADP(+) is bound by residues isoleucine 15 and 37–38 (SR). Lysine 91 acts as the Proton donor in catalysis. Residue aspartate 169 participates in NADP(+) binding.

It belongs to the Gfo/Idh/MocA family. In terms of assembly, monomer.

The enzyme catalyses alpha-L-arabinopyanose + NAD(+) = L-arabinono-1,4-lactone + NADH + H(+). It carries out the reaction alpha-L-arabinopyanose + NADP(+) = L-arabinono-1,4-lactone + NADPH + H(+). The catalysed reaction is D-galactose + NAD(+) = D-galactono-1,4-lactone + NADH + H(+). It catalyses the reaction D-galactose + NADP(+) = D-galactono-1,5-lactone + NADPH + H(+). It functions in the pathway carbohydrate degradation; L-arabinose degradation via L-arabinono-1,4-lactone pathway. Catalyzes the NAD(P)(+)-dependent conversion of L-arabinose to L-arabino-gamma-lactone. Is involved in a degradation pathway of L-arabinose that allows A.brasilense to grow on L-arabinose as a sole carbon source. Prefers NADP(+) to NAD(+) as electron acceptor. Displays high catalytic efficiency for both L-arabinose and D-galactose in vitro. However, the enzyme appears to be involved in the metabolism of L-arabinose but not D-galactose in vivo. To a lesser extent, is also active on D-talose and D-xylose as substrates in vitro, but not with D-arabinose, D-glucose, D-ribose, L-xylose, L-mannose, L-lyxose, and D-fructose. The sequence is that of L-arabinose 1-dehydrogenase (NAD(P)(+)) (araA) from Azospirillum brasilense.